A 2528-amino-acid chain; its full sequence is Highly reducing polyketide synthase pspA (2528 aa).

The segment at 1–53 is disordered; it reads MLAQDVEFVDLPPPEATAGAATTDNETSSFNSNPVPTPSEASSIGPPHQLPVP. The segment covering 24–42 has biased composition (polar residues); it reads DNETSSFNSNPVPTPSEAS. In terms of domain architecture, Ketosynthase family 3 (KS3) spans 63-483; sequence VEPMAICGMA…GSNAHVLLGS (421 aa). Catalysis depends on for beta-ketoacyl synthase activity residues Cys-235, His-371, and His-406. A malonyl-CoA:ACP transacylase (MAT) domain region spans residues 590–909; that stretch reads TFTGQGAQWA…HKDLLKAVGE (320 aa). The segment at 961–1089 is N-terminal hotdog fold; sequence HDILGSRVLE…GQVCAGSDRE (129 aa). The dehydratase (DH) domain stretch occupies residues 961 to 1230; that stretch reads HDILGSRVLE…VSNGHVTIDI (270 aa). One can recognise a PKS/mFAS DH domain in the interval 961-1244; the sequence is HDILGSRVLE…MSAIGDAADA (284 aa). His-993 (proton acceptor; for dehydratase activity) is an active-site residue. Residues 1099–1244 are C-terminal hotdog fold; it reads PRQLSRRGWY…MSAIGDAADA (146 aa). The active-site Proton donor; for dehydratase activity is the Asp-1160. Residues 1409 to 1587 form a methyltransferase (CMet) domain region; it reads VFLELLAHRK…GFSGINLVSH (179 aa). Positions 1803 to 2119 are enoyl reductase (ER) (ER) domain; sequence GLVDTLCWKS…RGQHIGKIVI (317 aa). A ketoreductase (KR) domain region spans residues 2143 to 2322; the sequence is RAYLFVGGLG…ASTVNIGVIQ (180 aa). The Carrier domain maps to 2447–2525; that stretch reads ETAELLAGEI…DLGVLAQKKL (79 aa). Position 2485 is an O-(pantetheine 4'-phosphoryl)serine (Ser-2485).

The enzyme catalyses 9 malonyl-CoA + acetyl-CoA + S-adenosyl-L-methionine + 13 NADPH + 20 H(+) = soppiline A + S-adenosyl-L-homocysteine + 9 CO2 + 13 NADP(+) + 10 CoA + 7 H2O. It participates in secondary metabolite biosynthesis. Functionally, highly reducing polyketide synthase; part of the gene cluster that mediates the biosynthesis of the alkylresorcinols called soppilines. The biosynthesis starts with the HR-PKS pspA-catalyzed carbon chain assembly through nine chain elongation cycles, using acetyl CoA and malonyl CoA as a starter and extender units, respectively, to produce the polyketide soppiline A. In the first round, the KR, DH, and CMeT domains work to produce 2-methyl-2-butenyl thioester. In rounds 2 to 5, the KR, DH, and ER domains fully catalyze the reduction of the elongated beta-ketothioester, resulting in the insertion of eight methylene units. The unusual Z,E,Z-triene motif is likely constructed during rounds 6 to 8. Typically, the DH domain introduces a double bond at an alpha,beta-position of an elongated polyketide chain, with the dehydration of a beta-hydroxy group. The last extension cycle would be carried out with L-oriented beta-ketoreduction by the KR domain to produce beta-hydroxy carboxylic acid soppiline A. The type III PKS pspB intercepts the elongated polyketide chain at round 8 from the HR-PKS pspA, followed by a tri-keto extension and decarboxylative aldol cyclization to produce 1,3,5-trisubstituted alkylresorcinol soppiline B. Subsequently, the cytochrome P450 monooxygenase pspC catalyzes three-step oxidations at the C-4 methyl group to carboxylic acid to yield soppiline C. In Penicillium soppii, this protein is Highly reducing polyketide synthase pspA.